The following is a 376-amino-acid chain: Chaperone protein DnaJ (376 aa).

The region spanning 4–70 is the J domain; that stretch reads DYYQILGVSK…QKRAAYDRFG (67 aa). The segment at 139–217 adopts a CR-type zinc-finger fold; it reads GVEKNISFSS…CHGLGRYHKQ (79 aa). Zn(2+) contacts are provided by Cys-152, Cys-155, Cys-169, Cys-172, Cys-191, Cys-194, Cys-205, and Cys-208. 4 CXXCXGXG motif repeats span residues 152–159, 169–176, 191–198, and 205–212; these read CDTCHGSG, CDACGGVG, CHKCQGNG, and CKKCHGLG.

It belongs to the DnaJ family. As to quaternary structure, homodimer. Requires Zn(2+) as cofactor.

Its subcellular location is the cytoplasm. Its function is as follows. Participates actively in the response to hyperosmotic and heat shock by preventing the aggregation of stress-denatured proteins and by disaggregating proteins, also in an autonomous, DnaK-independent fashion. Unfolded proteins bind initially to DnaJ; upon interaction with the DnaJ-bound protein, DnaK hydrolyzes its bound ATP, resulting in the formation of a stable complex. GrpE releases ADP from DnaK; ATP binding to DnaK triggers the release of the substrate protein, thus completing the reaction cycle. Several rounds of ATP-dependent interactions between DnaJ, DnaK and GrpE are required for fully efficient folding. Also involved, together with DnaK and GrpE, in the DNA replication of plasmids through activation of initiation proteins. The sequence is that of Chaperone protein DnaJ from Rickettsia bellii (strain OSU 85-389).